The chain runs to 189 residues: B3 domain-containing protein At2g32645 (189 aa).

Residues 33–133 (FNQVKTPDFL…KLCFALTPKI (101 aa)) constitute a DNA-binding region (TF-B3).

The protein localises to the nucleus. This is B3 domain-containing protein At2g32645 from Arabidopsis thaliana (Mouse-ear cress).